The sequence spans 1080 residues: MKLLYTDIQYNMIDILAGEAQLAAKAGKRVFYIAPNSLSFEKERAVLETLPERASFAITITRFEQMARYFVLNDIHQGETIDDNGLVMVFYRVLSSFSDQDLRVFGRLKQDAHFINQLVDLYKELKASNLTVLELNQLNSAEKQEDLIKIFTEVETILSAGHFDNQSKIAFFAQQIKFGHLDTALQDLTIVIDGFTRFSAEEENLIGLLHEKGVDIIIGTYISQKAYRSTFSNGNVYQASLDFIRGLAGKFQTKPEYVVSKQEALPAFTKLSQLFESCHDFSDSQLVLTDKDKEHVTIWDVINQKEEVEHVAKSIRRKLYEGHRYKDILVLLGDADAYKLQIGKIFDKYEIPYYFGKAESMSSHPLVHFVDSLERVKRYNFRAEDVMNLLKSGLYGKIRQNQLDKLEQYVIYADIKGKTKFFKDFTLDNHGQFDLKALNKLRAEVMSPLQELIKIQAQKGDSILQKLTNFLEAISLTNNFSKLIQGVSDTEQEKNEQVWKTFTVILEQFHTIFGQEKMKLADFLALLRSGMLAADYRTVPASVDVVTVKSYDLVEPHSNKFVFALGMTQSHFPKIVQNKSLISDEERAKINEATPDNRRFDIVTKENLKKNHFTALSLFNAATQELVLTLPQILNEAEDNTSSYLLELQDMGVPVVEKGGNRLAADPEDIGNYKALLSRVIELNRSAIDQELSKEEQTFWSVAVRYLRQKLAKEGLTIPEVNDKMQTKQVAAEVMAARFPIDQPLNLSSSALTTFYNNQYLYFLQYILGLQELETIHPDARNHGTYLHRVFELVMQDQSTDDFDSKLNRAIDITNHEDSFHLVYNEDEESRYALGILEDIARSTATVLKGDNPVQAESEEEAFELMLDQAVKIRGVIDRIDRLSDGSLGIVDYKSSKNTFDLQKFYNGLSPQLVTYIEALRSCKNLNDTDKIFGAMYLHMQEPKTDLANMKSIEKIPETVHKNLSYKGLFLEDEKAHLANGKYHLHDAVYSQKEVDLLLDYNKRLYRSAAKQIRKGNFLINPYSQDGKSVQGEQLKAITHFEADRHMPYARKLYQLPRKEKRQGFLALMQSKKEEEGNDL.

The protein belongs to the helicase family. AddB/RexB type 2 subfamily. As to quaternary structure, heterodimer of AddA and RexB. Mg(2+) serves as cofactor.

The heterodimer acts as both an ATP-dependent DNA helicase and an ATP-dependent, dual-direction single-stranded exonuclease. Recognizes the chi site generating a DNA molecule suitable for the initiation of homologous recombination. This subunit has 5' -&gt; 3' nuclease activity but not helicase activity. In Streptococcus mutans serotype c (strain ATCC 700610 / UA159), this protein is ATP-dependent helicase/deoxyribonuclease subunit B.